We begin with the raw amino-acid sequence, 211 residues long: ATP phosphoribosyltransferase (211 aa).

The protein belongs to the ATP phosphoribosyltransferase family. Short subfamily. In terms of assembly, heteromultimer composed of HisG and HisZ subunits.

It localises to the cytoplasm. It catalyses the reaction 1-(5-phospho-beta-D-ribosyl)-ATP + diphosphate = 5-phospho-alpha-D-ribose 1-diphosphate + ATP. Its pathway is amino-acid biosynthesis; L-histidine biosynthesis; L-histidine from 5-phospho-alpha-D-ribose 1-diphosphate: step 1/9. In terms of biological role, catalyzes the condensation of ATP and 5-phosphoribose 1-diphosphate to form N'-(5'-phosphoribosyl)-ATP (PR-ATP). Has a crucial role in the pathway because the rate of histidine biosynthesis seems to be controlled primarily by regulation of HisG enzymatic activity. This chain is ATP phosphoribosyltransferase, found in Lacticaseibacillus casei (strain BL23) (Lactobacillus casei).